The chain runs to 313 residues: MAQLDLTGLTETSKMIVGECHVELKRCAEPPLAADEPMPKKCRRPAGPPKGFISTRGDTSPSSDNNHIHSIQSLTNGDSCVQPWDIIANAYNIHENWKQLLLPELCCLRGSEILAEYERRAITEEVYPPKMDIFAWTRYCAPESVKAVIVGQDPYANPGQAHGLAFSVKQGVAIPPSLKNILLAVKACYPSADLGNHGCLEAWSKRGVLLLNSVLTVKRGDPGSHHSVGWQFFIRNILRRLSSTTRGIVFMLWGAQAQTMYFQTDYDDRHLVLKYSHPSPLSRKPFATCTHFKEANDFLSKIGRGCIDWSLTA.

Positions 35 to 68 are disordered; the sequence is DEPMPKKCRRPAGPPKGFISTRGDTSPSSDNNHI. Residues 56-68 show a composition bias toward polar residues; the sequence is RGDTSPSSDNNHI. Residue Asp153 is the Proton acceptor of the active site.

The protein belongs to the uracil-DNA glycosylase (UDG) superfamily. UNG family.

It is found in the host nucleus. It carries out the reaction Hydrolyzes single-stranded DNA or mismatched double-stranded DNA and polynucleotides, releasing free uracil.. In terms of biological role, excises uracil residues from the DNA which can arise as a result of misincorporation of dUMP residues by DNA polymerase or deamination of cytosines. Therefore may reduce deleterious uracil incorporation into the viral genome, particularly in terminally differentiated cells which lack DNA repair enzymes. The polypeptide is Uracil-DNA glycosylase (MDV014) (Gallus gallus (Chicken)).